The chain runs to 256 residues: Ribonuclease 3 (256 aa).

Positions 3–125 (LDALQQRLGY…IVGAVFLDAG (123 aa)) constitute an RNase III domain. Position 38 (glutamate 38) interacts with Mg(2+). Residue aspartate 42 is part of the active site. Residues aspartate 111 and glutamate 114 each coordinate Mg(2+). Residue glutamate 114 is part of the active site. One can recognise a DRBM domain in the interval 152–222 (DAKTLLQEYL…AKLALDEVQK (71 aa)). Residues 230–256 (RSRAERTGKTRKQPVPQDPQLSLRLKE) are disordered.

Belongs to the ribonuclease III family. In terms of assembly, homodimer. The cofactor is Mg(2+).

It localises to the cytoplasm. The enzyme catalyses Endonucleolytic cleavage to 5'-phosphomonoester.. Its function is as follows. Digests double-stranded RNA. Involved in the processing of primary rRNA transcript to yield the immediate precursors to the large and small rRNAs (23S and 16S). Processes some mRNAs, and tRNAs when they are encoded in the rRNA operon. Processes pre-crRNA and tracrRNA of type II CRISPR loci if present in the organism. This is Ribonuclease 3 from Cupriavidus necator (strain ATCC 17699 / DSM 428 / KCTC 22496 / NCIMB 10442 / H16 / Stanier 337) (Ralstonia eutropha).